The primary structure comprises 715 residues: Palmitoyltransferase ZDHHC5 (715 aa).

The Cytoplasmic segment spans residues 1 to 13 (MPAESGKRFKPSK). Residues 14-34 (YVPVSAAAIFLVGATTLFFAF) traverse the membrane as a helical segment. The Extracellular portion of the chain corresponds to 35-38 (TCPG). The helical transmembrane segment at 39 to 59 (LSLCVSPAVPIYNAIVFLFVL) threads the bilayer. At 60–148 (ANFSMATFMD…NCIGRRNYRY (89 aa)) the chain is on the cytoplasmic side. Residue Tyr-91 is modified to Phosphotyrosine. Residues 104–154 (KWCATCRFYRPPRCSHCSVCDNCVEEFDHHCPWVNNCIGRRNYRYFFLFLL) enclose the DHHC domain. Cys-134 functions as the S-palmitoyl cysteine intermediate in the catalytic mechanism. The chain crosses the membrane as a helical span at residues 149-169 (FFLFLLSLTAHIMGVFGFGLL). Topologically, residues 170-191 (YVLYHMEELSGVRTAVTMAVMC) are extracellular. Residues 192-212 (VAGLFFIPVAGLTGFHVVLVA) form a helical membrane-spanning segment. Topologically, residues 213 to 715 (RGRTTNEQVT…VGGTTYEISV (503 aa)) are cytoplasmic. A phosphoserine mark is found at Ser-247, Ser-296, and Ser-299. Residues 289 to 648 (GELRRSKSKG…SQKAPAGVSE (360 aa)) form a disordered region. Residue Thr-303 is modified to Phosphothreonine. Residue Ser-345 is modified to Phosphoserine. Phosphothreonine is present on residues Thr-348 and Thr-350. Residues 359–373 (SSSSTSAAMPHSSSA) show a composition bias toward low complexity. Phosphoserine occurs at positions 380, 398, 406, and 409. Phosphothreonine is present on Thr-411. 4 positions are modified to phosphoserine: Ser-415, Ser-425, Ser-429, and Ser-432. Residues 422 to 432 (SSGSRSSSLKS) show a composition bias toward low complexity. The residue at position 436 (Thr-436) is a Phosphothreonine. The span at 442 to 478 (QLQSIRSEGTTSTSYKSLANQTRNGSLSYDSLLTPSD) shows a compositional bias: polar residues. Phosphoserine is present on residues Ser-529 and Ser-554. Position 617 is an omega-N-methylarginine (Arg-617). A Phosphoserine modification is found at Ser-621. Residue Thr-659 is modified to Phosphothreonine. Residues 666–715 (LKTAYSKSNGQPKSIGSASPGPGQQPLSSPTRGGVKKVSGVGGTTYEISV) are disordered. Residues 668–679 (TAYSKSNGQPKS) show a composition bias toward polar residues. Low complexity predominate over residues 681–695 (GSASPGPGQQPLSSP). Residues Ser-684 and Ser-694 each carry the phosphoserine modification. Arg-697 bears the Omega-N-methylarginine mark.

It belongs to the DHHC palmitoyltransferase family. ERF2/ZDHHC9 subfamily. Post-translationally, phosphorylation regulates association with endocytic proteins and its subcellular localization. Phosphorylation by LYN during fatty acid uptake leads to inactivation of the activity. In terms of processing, autopalmitoylated. Palmitoylation of the C-terminal tail regulates stimulation-dependent plasma membrane motility.

The protein localises to the cell membrane. It carries out the reaction L-cysteinyl-[protein] + hexadecanoyl-CoA = S-hexadecanoyl-L-cysteinyl-[protein] + CoA. Palmitoyltransferase that catalyzes the addition of palmitate onto various protein substrates such as CTNND2, CD36, GSDMD, NLRP3, NOD1, NOD2, STAT3 and S1PR1 thus plays a role in various biological processes including cell adhesion, inflammation, fatty acid uptake, bacterial sensing or cardiac functions. Plays an important role in the regulation of synapse efficacy by mediating palmitoylation of delta-catenin/CTNND2, thereby increasing synaptic delivery and surface stabilization of alpha-amino-3-hydroxy-5-methyl-4-isoxazole propionic acid receptors (AMPARs). Under basal conditions, remains at the synaptic membrane through FYN-mediated phosphorylation that prevents association with endocytic proteins. Neuronal activity enhances the internalization and trafficking of DHHC5 from spines to dendritic shafts where it palmitoylates delta-catenin/CTNND2. Regulates cell adhesion at the plasma membrane by palmitoylating GOLGA7B and DSG2. Plays a role in innate immune response by mediating the palmitoylation of NOD1 and NOD2 and their proper recruitment to the bacterial entry site and phagosomes. Also participates in fatty acid uptake by palmitoylating CD36 and thereby targeting it to the plasma membrane. Upon binding of fatty acids to CD36, gets phosphorylated by LYN leading to inactivation and subsequent CD36 caveolar endocytosis. Controls oligodendrocyte development by catalyzing STAT3 palmitoylation. Acts as a regulator of inflammatory response by mediating palmitoylation of NLRP3 and GSDMD. Palmitoylates NLRP3 to promote inflammasome assembly and activation. Activates pyroptosis by catalyzing palmitoylation of gasdermin-D (GSDMD), thereby promoting membrane translocation and pore formation of GSDMD. The chain is Palmitoyltransferase ZDHHC5 (ZDHHC5) from Canis lupus familiaris (Dog).